Reading from the N-terminus, the 74-residue chain is Sec-independent protein translocase protein TatA (74 aa).

A helical transmembrane segment spans residues 1–21; it reads MGGISIWQLLIIVAIIVLLFG. The interval 51 to 74 is disordered; the sequence is ANFDKVEAKESTSTTEKTKEKEQA.

It belongs to the TatA/E family. In terms of assembly, the Tat system comprises two distinct complexes: a TatABC complex, containing multiple copies of TatA, TatB and TatC subunits, and a separate TatA complex, containing only TatA subunits. Substrates initially bind to the TatABC complex, which probably triggers association of the separate TatA complex to form the active translocon.

It is found in the cell inner membrane. Functionally, part of the twin-arginine translocation (Tat) system that transports large folded proteins containing a characteristic twin-arginine motif in their signal peptide across membranes. TatA could form the protein-conducting channel of the Tat system. The chain is Sec-independent protein translocase protein TatA from Haemophilus ducreyi (strain 35000HP / ATCC 700724).